Reading from the N-terminus, the 375-residue chain is S-adenosylmethionine:tRNA ribosyltransferase-isomerase (375 aa).

It belongs to the QueA family. In terms of assembly, monomer.

It localises to the cytoplasm. It carries out the reaction 7-aminomethyl-7-carbaguanosine(34) in tRNA + S-adenosyl-L-methionine = epoxyqueuosine(34) in tRNA + adenine + L-methionine + 2 H(+). It functions in the pathway tRNA modification; tRNA-queuosine biosynthesis. In terms of biological role, transfers and isomerizes the ribose moiety from AdoMet to the 7-aminomethyl group of 7-deazaguanine (preQ1-tRNA) to give epoxyqueuosine (oQ-tRNA). The polypeptide is S-adenosylmethionine:tRNA ribosyltransferase-isomerase (Rickettsia typhi (strain ATCC VR-144 / Wilmington)).